A 349-amino-acid chain; its full sequence is Ferredoxin--NADP reductase 1 (349 aa).

FAD is bound by residues glutamate 36, lysine 44, tyrosine 48, isoleucine 88, leucine 123, aspartate 290, and serine 331.

It belongs to the ferredoxin--NADP reductase type 2 family. Homodimer. Requires FAD as cofactor.

It carries out the reaction 2 reduced [2Fe-2S]-[ferredoxin] + NADP(+) + H(+) = 2 oxidized [2Fe-2S]-[ferredoxin] + NADPH. The chain is Ferredoxin--NADP reductase 1 from Bacillus thuringiensis (strain Al Hakam).